The chain runs to 170 residues: Non-classical export protein 102 (170 aa).

The Cytoplasmic segment spans residues 1 to 11 (MLAIGDVILRA). The region spanning 6 to 141 (DVILRAFNFV…TFIFIASAIF (136 aa)) is the MARVEL domain. Residues 12-32 (FNFVFLVIALGLTGSLAATTI) form a helical membrane-spanning segment. The Extracellular segment spans residues 33 to 38 (TQHNPQ). Residues 39-61 (INFAVFAAAFGLLTSSFYGVFAY) traverse the membrane as a helical segment. Residues 62 to 76 (FVAAFAWPVILFVFD) are Cytoplasmic-facing. The helical transmembrane segment at 77–97 (FLNFVFTFAAATAIAAGIRAH) threads the bilayer. Residues 98–125 (SCSNQDYLDDNNIAQGSSGRCRKAQAST) are Extracellular-facing. The chain crosses the membrane as a helical span at residues 126–146 (AFLYFSTFIFIASAIFSAISL). Residues 147–170 (SKGGLFGHSSRPAPRTGVPTMSQV) are Cytoplasmic-facing.

The protein belongs to the NCE102 family.

The protein resides in the cell membrane. In terms of biological role, involved in membrane organization. Involved in a novel pathway of export of proteins that lack a cleavable signal sequence. Non-classical export pathway also functions as an alternative clearance/detoxification pathway to eliminate damaged material, when the basic repair pathway is not sufficient. Regulates actin organization and subsequent morphogenesis and pathogenesis. The polypeptide is Non-classical export protein 102 (Candida albicans (strain SC5314 / ATCC MYA-2876) (Yeast)).